We begin with the raw amino-acid sequence, 350 residues long: LysM domain-containing GPI-anchored protein 2 (350 aa).

A signal peptide spans 1-23 (METSCFTLLGLLVSLSFFLTLSA). Residues N30, N48, N76, and N99 are each glycosylated (N-linked (GlcNAc...) asparagine). 4 cysteine pairs are disulfide-bonded: C31–C97, C38–C161, C95–C159, and C97–C161. 2 consecutive LysM domains span residues 108 to 155 (IEYT…KFWI) and 172 to 216 (YAHV…PLDV). Residues 114–120 (KDDILSF) and 142–149 (PDPNKIEI) each bind chitin. Residues N193, N238, N258, N289, and N305 are each glycosylated (N-linked (GlcNAc...) asparagine). 2 cysteine pairs are disulfide-bonded: C221–C253 and C248–C277. D318 is lipidated: GPI-anchor amidated aspartate. Residues 319-350 (SAGPDNYASTLSSSFNFVIVLIQCALLCLCLL) constitute a propeptide, removed in mature form.

Forms homooligomers. Interacts with CERK1. Binds to chitin oligosaccharide elicitor.

Its subcellular location is the cell membrane. Chitin elicitor-binding protein involved in the perception of chitin oligosaccharide elicitor. The protein is LysM domain-containing GPI-anchored protein 2 (LYM2) of Arabidopsis thaliana (Mouse-ear cress).